We begin with the raw amino-acid sequence, 194 residues long: Phosphoheptose isomerase (194 aa).

Residues 37-194 (ISNSFKQGGK…LIEFEMAKQA (158 aa)) enclose the SIS domain. 52–54 (NGG) is a binding site for substrate. Residues His-61 and Glu-65 each coordinate Zn(2+). Residues Glu-65, 93–94 (ND), 119–121 (STS), Ser-124, and Gln-172 each bind substrate. Gln-172 and His-180 together coordinate Zn(2+).

Belongs to the SIS family. GmhA subfamily. In terms of assembly, homotetramer. Zn(2+) is required as a cofactor.

It is found in the cytoplasm. It catalyses the reaction 2 D-sedoheptulose 7-phosphate = D-glycero-alpha-D-manno-heptose 7-phosphate + D-glycero-beta-D-manno-heptose 7-phosphate. It functions in the pathway carbohydrate biosynthesis; D-glycero-D-manno-heptose 7-phosphate biosynthesis; D-glycero-alpha-D-manno-heptose 7-phosphate and D-glycero-beta-D-manno-heptose 7-phosphate from sedoheptulose 7-phosphate: step 1/1. Catalyzes the isomerization of sedoheptulose 7-phosphate in D-glycero-D-manno-heptose 7-phosphate. This Haemophilus influenzae (strain 86-028NP) protein is Phosphoheptose isomerase.